Reading from the N-terminus, the 228-residue chain is Cytochrome c oxidase subunit 2 (228 aa).

The Mitochondrial intermembrane segment spans residues 1–26; the sequence is MSTWANLGLQDSASPLMEQLIFFHDH. Residues 27–48 form a helical membrane-spanning segment; sequence ALLILVMITVLVGYLMFMLFFN. The Mitochondrial matrix segment spans residues 49–62; it reads NYVNRFLLHGQLIE. Residues 63–82 form a helical membrane-spanning segment; sequence MIWTILPAIILLFIALPSLR. The Mitochondrial intermembrane portion of the chain corresponds to 83–228; it reads LLYLLDEINE…FIKWISSNNS (146 aa). Residues His161, Cys196, Glu198, Cys200, His204, and Met207 each coordinate Cu cation. Glu198 is a binding site for Mg(2+).

The protein belongs to the cytochrome c oxidase subunit 2 family. In terms of assembly, component of the cytochrome c oxidase (complex IV, CIV), a multisubunit enzyme composed of a catalytic core of 3 subunits and several supernumerary subunits. The complex exists as a monomer or a dimer and forms supercomplexes (SCs) in the inner mitochondrial membrane with ubiquinol-cytochrome c oxidoreductase (cytochrome b-c1 complex, complex III, CIII). Cu cation is required as a cofactor.

Its subcellular location is the mitochondrion inner membrane. It carries out the reaction 4 Fe(II)-[cytochrome c] + O2 + 8 H(+)(in) = 4 Fe(III)-[cytochrome c] + 2 H2O + 4 H(+)(out). Component of the cytochrome c oxidase, the last enzyme in the mitochondrial electron transport chain which drives oxidative phosphorylation. The respiratory chain contains 3 multisubunit complexes succinate dehydrogenase (complex II, CII), ubiquinol-cytochrome c oxidoreductase (cytochrome b-c1 complex, complex III, CIII) and cytochrome c oxidase (complex IV, CIV), that cooperate to transfer electrons derived from NADH and succinate to molecular oxygen, creating an electrochemical gradient over the inner membrane that drives transmembrane transport and the ATP synthase. Cytochrome c oxidase is the component of the respiratory chain that catalyzes the reduction of oxygen to water. Electrons originating from reduced cytochrome c in the intermembrane space (IMS) are transferred via the dinuclear copper A center (CU(A)) of subunit 2 and heme A of subunit 1 to the active site in subunit 1, a binuclear center (BNC) formed by heme A3 and copper B (CU(B)). The BNC reduces molecular oxygen to 2 water molecules using 4 electrons from cytochrome c in the IMS and 4 protons from the mitochondrial matrix. The chain is Cytochrome c oxidase subunit 2 (mt:CoII) from Drosophila yakuba (Fruit fly).